Here is a 98-residue protein sequence, read N- to C-terminus: NADH-ubiquinone oxidoreductase chain 4L (98 aa).

3 helical membrane passes run 1 to 21, 29 to 49, and 61 to 81; these read MSLVHMNIGLAFTVAFLGLLM, SLLCLEGMMLTLFIMSSIMVL, and IILLVFAACEAAVGLSLLVMV.

This sequence belongs to the complex I subunit 4L family. In terms of assembly, core subunit of respiratory chain NADH dehydrogenase (Complex I) which is composed of 45 different subunits.

The protein resides in the mitochondrion inner membrane. It carries out the reaction a ubiquinone + NADH + 5 H(+)(in) = a ubiquinol + NAD(+) + 4 H(+)(out). Its function is as follows. Core subunit of the mitochondrial membrane respiratory chain NADH dehydrogenase (Complex I) which catalyzes electron transfer from NADH through the respiratory chain, using ubiquinone as an electron acceptor. Part of the enzyme membrane arm which is embedded in the lipid bilayer and involved in proton translocation. The sequence is that of NADH-ubiquinone oxidoreductase chain 4L (MT-ND4L) from Pseudosoriculus fumidus (Taiwanese brown-toothed shrew).